A 152-amino-acid chain; its full sequence is Troponin C (152 aa).

At threonine 1 the chain carries N-acetylthreonine. 4 EF-hand domains span residues lysine 9–leucine 44, valine 45–glutamate 80, leucine 82–glutamate 117, and leucine 118–alanine 152. Ca(2+)-binding residues include aspartate 131, aspartate 133, serine 135, threonine 137, and glutamate 142.

This sequence belongs to the troponin C family.

In terms of biological role, troponin is the central regulatory protein of striated muscle contraction. Tn consists of three components: Tn-I which is the inhibitor of actomyosin ATPase, Tn-T which contains the binding site for tropomyosin and Tn-C. The binding of calcium to Tn-C abolishes the inhibitory action of Tn on actin filaments. The polypeptide is Troponin C (Mizuhopecten yessoensis (Japanese scallop)).